Here is a 312-residue protein sequence, read N- to C-terminus: uncharacterized protein (312 aa).

Composition is skewed to basic and acidic residues over residues 1–17 (MAKY…EQLE) and 28–39 (PDRDGPRHSAKL). Residues 1–39 (MAKYDHLELVRLPEQLERRKHGGGSPPPDRDGPRHSAKL) form a disordered region.

This is an uncharacterized protein from Sinorhizobium fredii (strain NBRC 101917 / NGR234).